Consider the following 327-residue polypeptide: Protein hunchback (327 aa).

3 consecutive C2H2-type zinc fingers follow at residues 1 to 5 (HMRNH), 11 to 33 (FQCS…LKSH), and 39 to 63 (YRCA…KYQH). Disordered regions lie at residues 91–121 (KQKP…HPIF), 143–170 (PPNN…MSPP), and 182–290 (ERPL…EVAS). Basic and acidic residues-rich tracts occupy residues 205 to 216 (THREMPTEHGDD) and 265 to 276 (LQHEDEKMRDAD). 2 C2H2-type zinc fingers span residues 297-319 (YTCQ…MGFH) and 325-327 (FMC).

It belongs to the hunchback C2H2-type zinc-finger protein family.

Its subcellular location is the nucleus. Functionally, gap class segmentation protein that controls development of head structures. This chain is Protein hunchback (hb), found in Manduca sexta (Tobacco hawkmoth).